Here is a 428-residue protein sequence, read N- to C-terminus: Enolase 1 (428 aa).

Residues 38–58 (EVPSGASTGENEAVELRDGGS) are disordered. Gln-163 is a binding site for (2R)-2-phosphoglycerate. Glu-205 serves as the catalytic Proton donor. Mg(2+) is bound by residues Asp-242, Glu-286, and Asp-313. The (2R)-2-phosphoglycerate site is built by Lys-338, Arg-367, Ser-368, and Lys-389. Lys-338 serves as the catalytic Proton acceptor.

Belongs to the enolase family. It depends on Mg(2+) as a cofactor.

It is found in the cytoplasm. Its subcellular location is the secreted. The protein resides in the cell surface. The catalysed reaction is (2R)-2-phosphoglycerate = phosphoenolpyruvate + H2O. It functions in the pathway carbohydrate degradation; glycolysis; pyruvate from D-glyceraldehyde 3-phosphate: step 4/5. Its function is as follows. Catalyzes the reversible conversion of 2-phosphoglycerate (2-PG) into phosphoenolpyruvate (PEP). It is essential for the degradation of carbohydrates via glycolysis. The protein is Enolase 1 of Lactobacillus gasseri (strain ATCC 33323 / DSM 20243 / BCRC 14619 / CIP 102991 / JCM 1131 / KCTC 3163 / NCIMB 11718 / NCTC 13722 / AM63).